A 472-amino-acid chain; its full sequence is MIMKVFNTLTRQKEEFKPLVAGKVSMYVCGPTVYNYIHIGNARSVIAFDTIRRYFEYRGYDVKYVSNFTDVDDKMINEARKEHTTVGELADRYIKAFMEDTEALNIEPATLHPRATHEIQEIIDFVQDLIDKGFAYEVDGDVYYRAKKFPNYGQLSDQNIAELEEGASEHINEEEQSKKEDPIDFALWKAQKDDDEIAWDSPWGKGRPGWHIECSVMSTKYLGDTIDIHGGGQDLEFPHHENEIAQSEAKTGKKFVNYWMHNGFVTVGKKQEKMSKSLHNFVTVHDILKQIDPQVLRFYMSSVQYRRPINYSEDGLKQAETVLKRYQNTLRNLDARLMDEQETLEDSILRDNLTQAKAEFIEAMDDDFNVQNALSIMYDLTSNLNTHLQKNQVDKPALKKAKKLLLAWLEIFGVSFNEKQTENDDEIEVMVAKRDEARKNKNWAESDRLRDELQAKGIVIEDTPQGTRWHRA.

Cys29 is a binding site for Zn(2+). Residues 31 to 41 carry the 'HIGH' region motif; sequence PTVYNYIHIGN. 3 residues coordinate Zn(2+): Cys214, His239, and Glu243. The 'KMSKS' region motif lies at 273 to 277; sequence KMSKS. Lys276 provides a ligand contact to ATP.

Belongs to the class-I aminoacyl-tRNA synthetase family. In terms of assembly, monomer. Zn(2+) is required as a cofactor.

The protein localises to the cytoplasm. The enzyme catalyses tRNA(Cys) + L-cysteine + ATP = L-cysteinyl-tRNA(Cys) + AMP + diphosphate. This is Cysteine--tRNA ligase from Lactobacillus gasseri (strain ATCC 33323 / DSM 20243 / BCRC 14619 / CIP 102991 / JCM 1131 / KCTC 3163 / NCIMB 11718 / NCTC 13722 / AM63).